A 68-amino-acid chain; its full sequence is DNA-directed RNA polymerase subunit Rpo10 (68 aa).

Residues C7, C10, C44, and C45 each coordinate Zn(2+).

It belongs to the archaeal Rpo10/eukaryotic RPB10 RNA polymerase subunit family. As to quaternary structure, part of the RNA polymerase complex. Zn(2+) serves as cofactor.

It localises to the cytoplasm. It carries out the reaction RNA(n) + a ribonucleoside 5'-triphosphate = RNA(n+1) + diphosphate. Functionally, DNA-dependent RNA polymerase (RNAP) catalyzes the transcription of DNA into RNA using the four ribonucleoside triphosphates as substrates. The polypeptide is DNA-directed RNA polymerase subunit Rpo10 (Methanococcus maripaludis (strain C5 / ATCC BAA-1333)).